The primary structure comprises 98 residues: UPF0251 protein SO_0727 (98 aa).

This sequence belongs to the UPF0251 family.

The chain is UPF0251 protein SO_0727 from Shewanella oneidensis (strain ATCC 700550 / JCM 31522 / CIP 106686 / LMG 19005 / NCIMB 14063 / MR-1).